Here is a 116-residue protein sequence, read N- to C-terminus: Cyclin-dependent protein kinase inhibitor SMR9 (116 aa).

Residues 1–22 (MASKGKKPLRRTTTRRRKRSHF) show a composition bias toward basic residues. The disordered stretch occupies residues 1–62 (MASKGKKPLR…PVSAESGCCT (62 aa)). Over residues 35 to 56 (VTSTSSTSTSPTSTATPSPVSA) the composition is skewed to low complexity.

Its function is as follows. Probable cyclin-dependent protein kinase (CDK) inhibitor that functions as a repressor of mitosis in the endoreduplication cell cycle. This is Cyclin-dependent protein kinase inhibitor SMR9 from Arabidopsis thaliana (Mouse-ear cress).